The primary structure comprises 351 residues: Palmitoyltransferase spe-10 (351 aa).

4 helical membrane passes run 21-43, 60-80, 198-218, and 241-261; these read TGWILTRCLNVLLFIQLILLWWS, IQATIYLIVGSFLFVMSMWSL, YFLLYIIYTSFLVYWYLLTSL, and LFSFIVGGVFGYYPLGELIIF. In terms of domain architecture, DHHC spans 154-204; that stretch reads KYCYECGHIKPDRARHCSSCGKCCIKYDHHCPWINMCVTHVNYKYFLLYII.

The protein belongs to the DHHC palmitoyltransferase family. Expressed during spermatogenesis in budding and budded spermatids.

Its subcellular location is the membrane. The catalysed reaction is L-cysteinyl-[protein] + hexadecanoyl-CoA = S-hexadecanoyl-L-cysteinyl-[protein] + CoA. Its function is as follows. Involved in spermatogenesis, specifically in the morphogenesis of fibrous body-membranous organelles (FB-MO), which are Golgi-derived organelles used for transporting sperm-specific components, in spermatocytes and in their localization into budding spermatids. Required for the proper formation of spermatids and spermatozoa. The sequence is that of Palmitoyltransferase spe-10 from Caenorhabditis elegans.